A 258-amino-acid chain; its full sequence is ATP synthase subunit a (258 aa).

Helical transmembrane passes span 30 to 50 (SSYF…VAMS), 85 to 105 (FFPF…LGMF), 122 to 142 (LIVT…YGVF), 151 to 171 (LFVP…IEII), 198 to 218 (FAGF…LAGI), and 230 to 250 (LEFL…CIYL).

It belongs to the ATPase A chain family. As to quaternary structure, F-type ATPases have 2 components, CF(1) - the catalytic core - and CF(0) - the membrane proton channel. CF(1) has five subunits: alpha(3), beta(3), gamma(1), delta(1), epsilon(1). CF(0) has three main subunits: a(1), b(2) and c(9-12). The alpha and beta chains form an alternating ring which encloses part of the gamma chain. CF(1) is attached to CF(0) by a central stalk formed by the gamma and epsilon chains, while a peripheral stalk is formed by the delta and b chains.

Its subcellular location is the cell inner membrane. Key component of the proton channel; it plays a direct role in the translocation of protons across the membrane. The chain is ATP synthase subunit a from Maricaulis maris (strain MCS10) (Caulobacter maris).